Here is a 317-residue protein sequence, read N- to C-terminus: TPR repeat-containing thioredoxin TDX (317 aa).

Residues 1 to 48 (MATAGASSFEDEIMESDIELEGEAVEPDNDPPQKMGDPSVEVSDEKRD) form a disordered region. Over residues 9–29 (FEDEIMESDIELEGEAVEPDN) the composition is skewed to acidic residues. 3 TPR repeats span residues 50–83 (AQLC…NPTS), 85–117 (IAYA…NPDS), and 119–151 (KGYK…DYDE). A Thioredoxin domain is found at 189-316 (EKQRKHAEEV…LERKVAQHGS (128 aa)). Catalysis depends on nucleophile residues C242 and C245. Cysteines 242 and 245 form a disulfide.

It belongs to the thioredoxin family.

In terms of biological role, probable thiol-disulfide oxidoreductase that may participate in various redox reactions and act as chaperone under heat shock. May interact with HSP70 proteins through the TPR repeats. This is TPR repeat-containing thioredoxin TDX from Oryza sativa subsp. japonica (Rice).